The sequence spans 420 residues: MMSMNSKQPHFAMHPTLPEHKYPSLHSSSEAIRRACLPTPPLQSNLFASLDETLLARAEALAAVDIAVSQGKSHPFKPDATYHTMNSVPCTSTSTVPLAHHHHHHHHHQALEPGDLLDHISSPSLALMAGAGGAGAAGGGGAPTRPRGAGGPGGGGGPGGGGPGVAGRRRGPGGGGGGPGGGLLGXSAHPHPHMHGXGHLSHPAAAAAMNMPSGLPHPGLVAAAAHHGAAAAAAAAAAGQVAAASAAAAVVGAAGLASICDSDTDPRELEAFAERFKQRRIKLGVTQADVGSALANLKIPGVGSLSQSTICRFESLTLSHNNMIALKPILQAWLEEAEGAQREKMNKPELFNGGEKKRKRTSIAAPEKRSLEAYFAVQPRPSSEKIAAIAEKLDLKKNVVRVWFCNQRQKQKRMKFSATY.

Positions 57–66 (RAEALAAVDI) match the POU-IV box motif. 2 disordered regions span residues 94 to 117 (STVP…GDLL) and 132 to 200 (GGAG…XGHL). The segment covering 99-108 (AHHHHHHHHH) has biased composition (basic residues). Gly residues-rich tracts occupy residues 132–165 (GGAG…GPGV) and 172–184 (PGGG…GGLL). Residues 261 to 338 (DSDTDPRELE…ILQAWLEEAE (78 aa)) enclose the POU-specific domain. Positions 356–415 (KKRKRTSIAAPEKRSLEAYFAVQPRPSSEKIAAIAEKLDLKKNVVRVWFCNQRQKQKRMK) form a DNA-binding region, homeobox.

The protein belongs to the POU transcription factor family. Class-4 subfamily. In terms of assembly, interacts (via N-terminus) with RIT2; the interaction controls POU4F1 transactivation activity on some neuronal target genes. Isoform 1 interacts with POU4F2; this interaction inhibits both POU4F1 DNA-binding and transcriptional activities. Isoform 1 interacts (C-terminus) with ESR1 (via DNA-binding domain); this interaction decreases the estrogen receptor ESR1 transcriptional activity in a DNA- and ligand 17-beta-estradiol-independent manner. As to expression, detected in brain, spinal cord and dorsal root ganglion. Isoform 2 is detected in brain, spinal cord, dorsal root ganglion and spleen.

The protein localises to the nucleus. It localises to the cytoplasm. Functionally, multifunctional transcription factor with different regions mediating its different effects. Acts by binding (via its C-terminal domain) to sequences related to the consensus octamer motif 5'-ATGCAAAT-3' in the regulatory regions of its target genes. Regulates the expression of specific genes involved in differentiation and survival within a subset of neuronal lineages. It has been shown that activation of some of these genes requires its N-terminal domain, maybe through a neuronal-specific cofactor. Activates BCL2 expression and protects neuronal cells from apoptosis (via the N-terminal domain). Induces neuronal process outgrowth and the coordinate expression of genes encoding synaptic proteins. Exerts its major developmental effects in somatosensory neurons and in brainstem nuclei involved in motor control. Stimulates the binding affinity of the nuclear estrogene receptor ESR1 to DNA estrogen response element (ERE), and hence modulates ESR1-induced transcriptional activity. May positively regulate POU4F2 and POU4F3. Regulates dorsal root ganglion sensory neuron specification and axonal projection into the spinal cord. Plays a role in TNFSF11-mediated terminal osteoclast differentiation. Negatively regulates its own expression interacting directly with a highly conserved autoregulatory domain surrounding the transcription initiation site. Able to act as transcription factor, cannot regulate the expression of the same subset of genes than isoform 1. Does not have anitapoptotic effect on neuronal cells. The sequence is that of POU domain, class 4, transcription factor 1 (Pou4f1) from Rattus norvegicus (Rat).